The chain runs to 77 residues: Dermatoxin-DA1 (77 aa).

The signal sequence occupies residues 1 to 22 (MAFLKKSLFLVLFLGLVPLFLC). The propeptide occupies 23-42 (ENEKREGENEKEENDDQSEE). Position 76 is a lysine amide (K76).

The protein belongs to the frog skin active peptide (FSAP) family. Dermatoxin subfamily. Expressed by the skin glands.

It localises to the secreted. Its function is as follows. Possesses a potent antimicrobial activity against Gram-positive and Gram-negative bacteria. Probably acts by disturbing membrane functions with its amphipathic structure. This Agalychnis dacnicolor (Giant Mexican leaf frog) protein is Dermatoxin-DA1.